The chain runs to 1233 residues: Glutamate receptor ionotropic, NMDA 2C (1233 aa).

Residues 1 to 19 (MGGALGPALLLTSLFGAWA) form the signal peptide. Residues 20 to 554 (GLGPGQGEQG…SAFLEPYSPA (535 aa)) lie on the Extracellular side of the membrane. N-linked (GlcNAc...) asparagine glycans are attached at residues asparagine 70 and asparagine 73. Cysteine 82 and cysteine 317 are disulfide-bonded. Residues asparagine 337 and asparagine 438 are each glycosylated (N-linked (GlcNAc...) asparagine). Cystine bridges form between cysteine 426-cysteine 453 and cysteine 433-cysteine 454. L-glutamate-binding residues include serine 509, threonine 511, and arginine 516. Asparagine 539 is a glycosylation site (N-linked (GlcNAc...) asparagine). A helical membrane pass occupies residues 555–575 (VWVMMFVMCLTVVAITVFMFE). Residues 576–598 (YFSPVSYNQNLTRGKKSGGPAFT) lie on the Cytoplasmic side of the membrane. Positions 599–611 (IGKSVWLLWALVF) form an intramembrane region, discontinuously helical. The tract at residues 601 to 620 (KSVWLLWALVFNNSVPIENP) is pore-forming. Residues 612–626 (NNSVPIENPRGTTSK) lie on the Cytoplasmic side of the membrane. Residues 627-644 (IMVLVWAFFAVIFLASYT) traverse the membrane as a helical segment. At 645 to 813 (ANLAAFMIQE…EVMSSKLDID (169 aa)) the chain is on the extracellular side. Asparagine 685 carries an N-linked (GlcNAc...) asparagine glycan. Positions 687, 688, and 729 each coordinate L-glutamate. A disulfide bridge links cysteine 743 with cysteine 798. Residues 814–836 (NMAGVFYMLLVAMGLALLVFAWE) form a helical membrane-spanning segment. Residues 837–1233 (HLVYWKLRHS…RRISSLESEV (397 aa)) lie on the Cytoplasmic side of the membrane. A phosphoserine mark is found at serine 875, serine 881, and serine 912. The tract at residues 920–994 (IENWGGGRRA…GPPLSDVSRV (75 aa)) is disordered. Composition is skewed to pro residues over residues 929–956 (APPPSPCPTPRSGPSPCLPTPDPPPEPS) and 975–987 (PQPPGRPPTPGPP). The short motif at 1231–1233 (SEV) is the PDZ-binding element.

Belongs to the glutamate-gated ion channel (TC 1.A.10.1) family. NR2C/GRIN2C subfamily. Heterotetramer. Forms heterotetrameric channels composed of two GluN1/zeta subunits (GRIN1), and two identical GluN2/epsilon subunits (GRIN2A, GRIN2B, GRIN2C or GRIN2D) or GluN3 subunits (GRIN3A or GRIN3B) (in vitro). In vivo, the subunit composition may depend on the expression levels of the different subunits. Interacts with PDZ domains of PATJ and DLG4. Interacts (via PDZ-binding motif) with SNX27 (via PDZ domain); the interaction is required for recycling to the plasma membrane when endocytosed and prevent degradation in lysosomes. As to expression, mainly expressed in brain with predominant expression is in the cerebellum, also present in the hippocampus, amygdala, caudate nucleus, corpus callosum, subthalamic nuclei and thalamus. Detected in the heart, skeletal muscle and pancreas.

It localises to the cell membrane. The protein localises to the postsynaptic cell membrane. The catalysed reaction is Ca(2+)(in) = Ca(2+)(out). The enzyme catalyses Na(+)(in) = Na(+)(out). It catalyses the reaction K(+)(in) = K(+)(out). Functionally, component of N-methyl-D-aspartate (NMDA) receptors (NMDARs) that function as heterotetrameric, ligand-gated cation channels with high calcium permeability and voltage-dependent block by Mg(2+). Participates in synaptic plasticity for learning and memory formation by contributing to the slow phase of excitatory postsynaptic current and long-term synaptic potentiation. Channel activation requires binding of the neurotransmitter L-glutamate to the GluN2 subunit, glycine or D-serine binding to the GluN1 subunit, plus membrane depolarization to eliminate channel inhibition by Mg(2+). NMDARs mediate simultaneously the potasium efflux and the influx of calcium and sodium. Each GluN2 subunit confers differential attributes to channel properties, including activation, deactivation and desensitization kinetics, pH sensitivity, Ca2(+) permeability, and binding to allosteric modulators. This chain is Glutamate receptor ionotropic, NMDA 2C, found in Homo sapiens (Human).